Reading from the N-terminus, the 386-residue chain is tRNA N6-adenosine threonylcarbamoyltransferase (386 aa).

Positions 112 and 116 each coordinate Fe cation. Substrate is bound by residues 134–138 (LASGG), Asp167, Gly180, and Asn322. Asp350 serves as a coordination point for Fe cation.

The protein belongs to the KAE1 / TsaD family. The cofactor is Fe(2+).

The protein localises to the cytoplasm. It carries out the reaction L-threonylcarbamoyladenylate + adenosine(37) in tRNA = N(6)-L-threonylcarbamoyladenosine(37) in tRNA + AMP + H(+). Its function is as follows. Required for the formation of a threonylcarbamoyl group on adenosine at position 37 (t(6)A37) in tRNAs that read codons beginning with adenine. Is involved in the transfer of the threonylcarbamoyl moiety of threonylcarbamoyl-AMP (TC-AMP) to the N6 group of A37, together with TsaE and TsaB. TsaD likely plays a direct catalytic role in this reaction. This chain is tRNA N6-adenosine threonylcarbamoyltransferase, found in Rickettsia akari (strain Hartford).